Consider the following 626-residue polypeptide: Serine/threonine-protein kinase PknH (626 aa).

Topologically, residues 1–403 (MSDAQDSRVG…QTPRKTNPWP (403 aa)) are cytoplasmic. The 261-residue stretch at 16-276 (YHLKRLLGRG…DLALAAHEAL (261 aa)) folds into the Protein kinase domain. ATP-binding positions include 22-30 (LGRGGMGEV) and Lys45. The active-site Proton acceptor is Asp139. Position 170 is a phosphothreonine (Thr170). Positions 292–396 (QESTLPAPPK…GGPSPWAQTP (105 aa)) are disordered. Pro residues-rich tracts occupy residues 297-308 (PAPPKPVPPPTM) and 316-342 (RQPP…PAQP). Positions 343-355 (GPAGQRPGPTGQP) are enriched in low complexity. Residues 404–424 (LVAGAAAVVLVLVLGAIGIWI) form a helical membrane-spanning segment. At 425 to 626 (AIRPKPVQPP…AKIVDKVNKE (202 aa)) the chain is on the extracellular side. 2 disulfide bridges follow: Cys482–Cys545 and Cys587–Cys604.

This sequence belongs to the protein kinase superfamily. Ser/Thr protein kinase family. The cofactor is a divalent metal cation. Post-translationally, autophosphorylated on threonine and serine residues. Dephosphorylated by PstP.

The protein localises to the cell membrane. It catalyses the reaction L-seryl-[protein] + ATP = O-phospho-L-seryl-[protein] + ADP + H(+). It carries out the reaction L-threonyl-[protein] + ATP = O-phospho-L-threonyl-[protein] + ADP + H(+). May regulate bacterial growth in response to external signals to facilitate adaptation to the host environment. This Mycobacterium tuberculosis (strain CDC 1551 / Oshkosh) protein is Serine/threonine-protein kinase PknH (pknH).